We begin with the raw amino-acid sequence, 268 residues long: Phosphatidylglycerol--prolipoprotein diacylglyceryl transferase (268 aa).

The next 7 membrane-spanning stretches (helical) occupy residues 27-47 (PALRWYGFTYLVGFVAAMWLL), 66-86 (LLFYGFLGVILGGRIGYVLFY), 104-124 (GGMSFHGGLMGVITAMIYIAW), 130-150 (FFAVADMVAPVVPIGLGAGRI), 181-201 (PSQLYQFALEGVALFLLLYWF), 208-228 (VGAVSGMFLLGYGIFRVIVET), and 242-262 (FMTMGQILSVPMILFGLYLIL). Arg149 contacts a 1,2-diacyl-sn-glycero-3-phospho-(1'-sn-glycerol).

Belongs to the Lgt family.

It is found in the cell inner membrane. The catalysed reaction is L-cysteinyl-[prolipoprotein] + a 1,2-diacyl-sn-glycero-3-phospho-(1'-sn-glycerol) = an S-1,2-diacyl-sn-glyceryl-L-cysteinyl-[prolipoprotein] + sn-glycerol 1-phosphate + H(+). It participates in protein modification; lipoprotein biosynthesis (diacylglyceryl transfer). Functionally, catalyzes the transfer of the diacylglyceryl group from phosphatidylglycerol to the sulfhydryl group of the N-terminal cysteine of a prolipoprotein, the first step in the formation of mature lipoproteins. The sequence is that of Phosphatidylglycerol--prolipoprotein diacylglyceryl transferase from Shewanella sp. (strain ANA-3).